The chain runs to 326 residues: Adenosine receptor A1 (326 aa).

Over 1 to 10 (MPPSISAFQA) the chain is Extracellular. Residues 11 to 33 (AYIGIEVLIALVSVPGNVLVIWA) traverse the membrane as a helical segment. Residues 34-46 (VKVNQALRDATFC) are Cytoplasmic-facing. The helical transmembrane segment at 47-69 (FIVSLAVADVAVGALVIPLAILI) threads the bilayer. Residues 70–80 (NIGPRTYFHTC) lie on the Extracellular side of the membrane. A disulfide bridge links cysteine 80 with cysteine 169. A helical membrane pass occupies residues 81-102 (LKVACPVLILTQSSILALLAIA). Topologically, residues 103–123 (VDRYLRVKIPLRYKTVVTPRR) are cytoplasmic. Residues 124 to 146 (AVVAITGCWILSFVVGLTPMFGW) traverse the membrane as a helical segment. Topologically, residues 147 to 176 (NNLSAVERDWLANGSVGEPVIECQFEKVIS) are extracellular. N-linked (GlcNAc...) asparagine glycans are attached at residues asparagine 148 and asparagine 159. Residues 177–201 (MEYMVYFNFFVWVLPPLLLMVLIYM) form a helical membrane-spanning segment. The Cytoplasmic segment spans residues 202–235 (EVFYLIRKQLNKKVSASSGDPQKYYGKELKIAKS). Residues 236–259 (LALILFLFALSWLPLHILNCITLF) traverse the membrane as a helical segment. Residues 260 to 267 (CPSCHMPR) lie on the Extracellular side of the membrane. A helical transmembrane segment spans residues 268–292 (ILIYIAIFLSHGNSAMNPIVYAFRI). The Cytoplasmic segment spans residues 293 to 326 (QKFRVTFLKIWNDHFRCQPAPPVDEDAPAERPDD). Cysteine 309 carries S-palmitoyl cysteine lipidation.

The protein belongs to the G-protein coupled receptor 1 family.

The protein resides in the cell membrane. Receptor for adenosine. The activity of this receptor is mediated by G proteins which inhibit adenylyl cyclase. This is Adenosine receptor A1 (ADORA1) from Bos taurus (Bovine).